The sequence spans 226 residues: ATP synthase F(0) complex subunit a (226 aa).

The next 6 membrane-spanning stretches (helical) occupy residues 11-31 (APSMMGLPIVVLIVMFPSILF), 68-88 (WALMLMSLILFIGSTNLLGLL), 97-117 (QLSMNLGMAIPLWAGTVITGF), 138-158 (IPMLVVIETISLFIQPMALAV), 164-184 (ITAGHLLIHLIGGATLALINI), and 189-209 (AFITFIILILLTILEFAVALI).

It belongs to the ATPase A chain family. Component of the ATP synthase complex composed at least of ATP5F1A/subunit alpha, ATP5F1B/subunit beta, ATP5MC1/subunit c (homooctomer), MT-ATP6/subunit a, MT-ATP8/subunit 8, ATP5ME/subunit e, ATP5MF/subunit f, ATP5MG/subunit g, ATP5MK/subunit k, ATP5MJ/subunit j, ATP5F1C/subunit gamma, ATP5F1D/subunit delta, ATP5F1E/subunit epsilon, ATP5PF/subunit F6, ATP5PB/subunit b, ATP5PD/subunit d, ATP5PO/subunit OSCP. ATP synthase complex consists of a soluble F(1) head domain (subunits alpha(3) and beta(3)) - the catalytic core - and a membrane F(0) domain - the membrane proton channel (subunits c, a, 8, e, f, g, k and j). These two domains are linked by a central stalk (subunits gamma, delta, and epsilon) rotating inside the F1 region and a stationary peripheral stalk (subunits F6, b, d, and OSCP). Interacts with DNAJC30; interaction is direct.

It localises to the mitochondrion inner membrane. The catalysed reaction is H(+)(in) = H(+)(out). Functionally, subunit a, of the mitochondrial membrane ATP synthase complex (F(1)F(0) ATP synthase or Complex V) that produces ATP from ADP in the presence of a proton gradient across the membrane which is generated by electron transport complexes of the respiratory chain. ATP synthase complex consist of a soluble F(1) head domain - the catalytic core - and a membrane F(1) domain - the membrane proton channel. These two domains are linked by a central stalk rotating inside the F(1) region and a stationary peripheral stalk. During catalysis, ATP synthesis in the catalytic domain of F(1) is coupled via a rotary mechanism of the central stalk subunits to proton translocation. With the subunit c (ATP5MC1), forms the proton-conducting channel in the F(0) domain, that contains two crucial half-channels (inlet and outlet) that facilitate proton movement from the mitochondrial intermembrane space (IMS) into the matrix. Protons are taken up via the inlet half-channel and released through the outlet half-channel, following a Grotthuss mechanism. The polypeptide is ATP synthase F(0) complex subunit a (Canis lupus familiaris (Dog)).